The sequence spans 272 residues: Sulfate transporter CysZ (272 aa).

The next 4 membrane-spanning stretches (helical) occupy residues 29–49 (FVII…WLFI), 66–86 (WLSF…LLLF), 148–168 (IIAL…VPVL), and 219–239 (FVPV…TLMW).

Belongs to the CysZ family.

It localises to the cell inner membrane. Functionally, high affinity, high specificity proton-dependent sulfate transporter, which mediates sulfate uptake. Provides the sulfur source for the cysteine synthesis pathway. The chain is Sulfate transporter CysZ from Haemophilus influenzae (strain 86-028NP).